The chain runs to 110 residues: UPF0122 protein BPUM_1495 (110 aa).

The protein belongs to the UPF0122 family.

In terms of biological role, might take part in the signal recognition particle (SRP) pathway. This is inferred from the conservation of its genetic proximity to ftsY/ffh. May be a regulatory protein. The sequence is that of UPF0122 protein BPUM_1495 from Bacillus pumilus (strain SAFR-032).